A 371-amino-acid polypeptide reads, in one-letter code: MSQTLVLKIGTSSLTNPDTGHLALATIASLVEVLSQLRQEGNQVILVSSGAVGIGCARLGLAERPKAIALKQAVAAVGQGRLMRIYDDFFTSLQQPIAQVLLTRGDLADRSRYINASNTLQELLKLGVIPIVNENDTVAVDELLRFGDNDTLSALVAGLVQADWLFILTDVDRLYSADPRIQPDAQPIVTVERMEELAALNVNAGAQGSQWGTGGMATKISAAAIATNAGVRTVITQGKTPENIPRILAGESLGTQFQPHPRPHNARKHWIAHALVPTGKLILDDGAAKAITTLGKSLLAAGITAVEGEFQSQEAVCFYDSAGVEIARGLVNYSSDELQRIQGRQSEDIPQVLGYAGAETVVHRDNLVITG.

K8 provides a ligand contact to ATP. S49, D136, and N149 together coordinate substrate. ATP is bound by residues 169-170 (TD) and 213-219 (TGGMATK). The PUA domain maps to 278–356 (TGKLILDDGA…EDIPQVLGYA (79 aa)).

The protein belongs to the glutamate 5-kinase family.

It localises to the cytoplasm. The enzyme catalyses L-glutamate + ATP = L-glutamyl 5-phosphate + ADP. The protein operates within amino-acid biosynthesis; L-proline biosynthesis; L-glutamate 5-semialdehyde from L-glutamate: step 1/2. In terms of biological role, catalyzes the transfer of a phosphate group to glutamate to form L-glutamate 5-phosphate. This is Glutamate 5-kinase from Acaryochloris marina (strain MBIC 11017).